The chain runs to 442 residues: QWRF motif-containing protein 6 (442 aa).

Disordered stretches follow at residues 1–144 (MEAK…LSQQ) and 221–240 (FSRL…ADTK). The segment covering 57-66 (KQHHLQHHQI) has biased composition (basic residues). The segment covering 80–89 (KMADGDENRS) has biased composition (basic and acidic residues). The short motif at 264–267 (QWRF) is the QWRF motif element.

The protein belongs to the QWRF family.

The polypeptide is QWRF motif-containing protein 6 (QWRF6) (Arabidopsis thaliana (Mouse-ear cress)).